A 2715-amino-acid chain; its full sequence is Histone-lysine N-methyltransferase 2B (2715 aa).

Residues 1 to 11 (MAAAAGGGSCP) show a composition bias toward gly residues. 4 disordered regions span residues 1–65 (MAAA…GEDT), 81–302 (RRLW…GGLP), 320–518 (SLGL…PKST), and 532–771 (VSAR…QMPP). Position 2 is an N-acetylalanine (A2). Residues 12–24 (GPGSARGRFPGRP) are compositionally biased toward low complexity. Residues 17 to 36 (RGRFPGRPRGAGGGGGRGGR) carry the Menin-binding motif (MBM) motif. Composition is skewed to gly residues over residues 25–38 (RGAG…GRGN) and 49–60 (RGGGATGPGGAE). The a.T hook 1 DNA-binding region spans 37–44 (GNGAERVR). The segment covering 109-123 (PEEESSDGESDEEEF) has biased composition (acidic residues). Residues 110 to 117 (EEESSDGE) constitute a DNA-binding region (a.T hook 2). 3 positions are modified to phosphoserine: S113, S114, and S118. The segment covering 144–158 (QRGRAPRGRGRKHKT) has biased composition (basic residues). Residues 160 to 176 (PLPPPRLADVAPTPPKT) show a composition bias toward pro residues. Residues 199-208 (RAQAPQAPRS) are compositionally biased toward low complexity. S351 is subject to Phosphoserine. Positions 357-365 (QEQKLDDEE) form a DNA-binding region, a.T hook 3. The span at 361 to 374 (LDDEEEEKKEEEEK) shows a compositional bias: acidic residues. Positions 375–387 (DKEGEEKEERAVA) are enriched in basic and acidic residues. Residues 401–449 (LPPPPLTPPAPSPPPPLPPPSTSPPPPLCPPPPPPVSPPPLPSPPPPPA) are compositionally biased toward pro residues. Residues 545 to 556 (RFMDEDPPKPPK) show a composition bias toward basic and acidic residues. The segment covering 568 to 596 (TTSPPVPQEPAPVPSPPRAPTPPSTPVPL) has biased composition (pro residues). Over residues 597–608 (PEKRRSILREPT) the composition is skewed to basic and acidic residues. Residues 618-637 (LPPPPPAPPPPPAPSPPPAP) are compositionally biased toward pro residues. Over residues 731–751 (PQTQAQLLQPLQALQTQLLPQ) the composition is skewed to low complexity. The segment covering 752–769 (ALPPPQPQLQPPPSPQQM) has biased composition (pro residues). K805 participates in a covalent cross-link: Glycyl lysine isopeptide (Lys-Gly) (interchain with G-Cter in SUMO2). Disordered regions lie at residues 819–868 (PLSP…GPRI) and 894–959 (SALP…HHGK). 3 positions are modified to phosphoserine: S821, S844, and S861. The span at 836-857 (ISDRGPVRSEDESVEAKRERPS) shows a compositional bias: basic and acidic residues. Residues 907 to 917 (EDTSSASETES) show a composition bias toward low complexity. Residue S936 is modified to Phosphoserine. Over residues 948 to 959 (TPRRSLPSHHGK) the composition is skewed to basic residues. The CXXC-type zinc finger occupies 959 to 1006 (KKMRMARCGHCRGCLRVQDCGSCVNCLDKPKFGGPNTKKQCCVYRKCD). Zn(2+)-binding residues include C966, C969, C972, C978, C981, C984, C1000, and C1005. Positions 1027–1132 (LLPWDSDESP…RPRKPTLQPV (106 aa)) are disordered. Phosphoserine occurs at positions 1032, 1035, 1092, and 1095. Residue K1136 forms a Glycyl lysine isopeptide (Lys-Gly) (interchain with G-Cter in SUMO2) linkage. A disordered region spans residues 1146-1166 (LAPGPFASFPNGWTGKQKSPD). 3 consecutive PHD-type zinc fingers follow at residues 1201 to 1252 (PMVC…CKFC), 1249 to 1303 (CKFC…CVRC), and 1335 to 1396 (GNYC…CAGA). In terms of domain architecture, Bromo spans 1404–1504 (ALSGALQGGL…GLLLKLLESA (101 aa)). A disordered region spans residues 1545-1567 (QQEPETPESGQPPGDPSAAFQGK). The segment at 1578 to 1618 (PRQCALCLKYGDADSKEAGRLLYIGQNEWTHVNCAIWSAEV) adopts a C2HC pre-PHD-type zinc-finger fold. A PHD-type 4 zinc finger spans residues 1639 to 1686 (MRCELCLKPGATVGCCLSSCLSNFHFMCARASYCIFQDDKKVFCQKHT). Positions 1727–1783 (AINVLIGSIRIDSLGTLSDLSDCEGRLFPIGYQCSRLYWSTVDARRRCWYRCRILEY) constitute an FYR N-terminal domain. Disordered regions lie at residues 1806–1978 (HSPA…PDFE), 2008–2093 (VAAG…VVRA), 2118–2162 (LKNL…PTRT), and 2280–2412 (RVST…RTGP). A compositionally biased stretch (low complexity) spans 1876 to 1894 (PLGGVSFGPLPSPGSPSSL). S1930 and S1936 each carry phosphoserine. Over residues 1960-1972 (PPGPAPSPPPPED) the composition is skewed to pro residues. Acidic residues predominate over residues 2062 to 2072 (DGVDDGTDSEA). T2068 and T2083 each carry phosphothreonine. Over residues 2144-2153 (NGSQPSQGLT) the composition is skewed to polar residues. Phosphoserine occurs at positions 2288 and 2348. The span at 2342–2351 (EPAGEESPGP) shows a compositional bias: low complexity. Residues 2359–2373 (LPLPEDGPPQVPDGP) show a composition bias toward pro residues. One can recognise an FYR C-terminal domain in the interval 2411-2492 (GPHLRFEISS…QRCQHYKFRY (82 aa)). Positions 2508 to 2513 (GAARAE) match the WDR5 interaction motif (WIN) motif. Positions 2575 to 2691 (EAVGVYRSAI…RGEELTYDYK (117 aa)) constitute an SET domain. S-adenosyl-L-methionine is bound by residues H2585, R2587, Y2629, and 2652–2653 (NH). 2 residues coordinate Zn(2+): C2655 and C2703. Residues 2699-2715 (NKLPCNCGAKRCRRFLN) form the Post-SET domain. N2704 is a binding site for S-adenosyl-L-methionine. Zn(2+)-binding residues include C2705 and C2710.

Belongs to the class V-like SAM-binding methyltransferase superfamily. Histone-lysine methyltransferase family. TRX/MLL subfamily. In terms of assembly, component of the menin-associated histone methyltransferase complex, at least composed of KMT2B/MLL4, ASH2L, RBBP5, WDR5, DPY30, MEN1; the complex interacts with POLR2A and POLR2B via MEN1. Interacts with NFE2. Interacts with KDM6B. Interacts (via WIN motif) with WDR5. Interacts (via MBM motif) with MEN1. Forms a core complex with the evolutionary conserved subcomplex WRAD composed of WDR5, RBBP5, ASH2L/ASH2 and DPY30 subunits; WRAD differentially stimulates the methyltransferase activity. As to expression, widely expressed. Highest levels in testis. Also found in brain with higher expression in the cerebellum than in any other region, bone marrow, heart, muscle, kidney, placenta, spleen, thymus, prostate, ovary, intestine, colon, peripheral blood lymphocytes and pancreas. Often amplified in pancreatic carcinomas.

It localises to the nucleus. The catalysed reaction is L-lysyl(4)-[histone H3] + S-adenosyl-L-methionine = N(6)-methyl-L-lysyl(4)-[histone H3] + S-adenosyl-L-homocysteine + H(+). The enzyme catalyses N(6)-methyl-L-lysyl(4)-[histone H3] + S-adenosyl-L-methionine = N(6),N(6)-dimethyl-L-lysyl(4)-[histone H3] + S-adenosyl-L-homocysteine + H(+). Histone methyltransferase that catalyzes methyl group transfer from S-adenosyl-L-methionine to the epsilon-amino group of 'Lys-4' of histone H3 (H3K4) via a non-processive mechanism. Part of chromatin remodeling machinery predominantly forms H3K4me1 and H3K4me2 methylation marks at active chromatin sites where transcription and DNA repair take place. Likely plays a redundant role with KMT2C in enriching H3K4me1 marks on primed and active enhancer elements. Plays a central role in beta-globin locus transcription regulation by being recruited by NFE2. Plays an important role in controlling bulk H3K4me during oocyte growth and preimplantation development. Required during the transcriptionally active period of oocyte growth for the establishment and/or maintenance of bulk H3K4 trimethylation (H3K4me3), global transcriptional silencing that preceeds resumption of meiosis, oocyte survival and normal zygotic genome activation. The sequence is that of Histone-lysine N-methyltransferase 2B (KMT2B) from Homo sapiens (Human).